The chain runs to 545 residues: T-complex protein 1 subunit gamma (545 aa).

Residue Met-1 is modified to N-acetylmethionine. The disordered stretch occupies residues 1 to 24; the sequence is MMGHRPVLVLSQNTKRESGRKVQS. At Ser-11 the chain carries Phosphoserine. Lys-15 is covalently cross-linked (Glycyl lysine isopeptide (Lys-Gly) (interchain with G-Cter in SUMO2)). Positions 42, 94, 95, 96, 97, 162, and 163 each coordinate ADP. Residues Gly-42, Gly-94, Thr-95, and Thr-96 each contribute to the ATP site. Ser-170 is subject to Phosphoserine. At Lys-222 the chain carries N6-acetyllysine. A phosphoserine mark is found at Ser-243 and Ser-244. Position 247 is a phosphotyrosine (Tyr-247). Residues Lys-248 and Lys-249 each participate in a glycyl lysine isopeptide (Lys-Gly) (interchain with G-Cter in SUMO2) cross-link. Residue Ser-252 is modified to Phosphoserine. The cysteines at positions 366 and 372 are disulfide-linked. Residue Lys-381 forms a Glycyl lysine isopeptide (Lys-Gly) (interchain with G-Cter in SUMO2) linkage. Residue Gly-411 coordinates ADP. Gly-411 contacts ATP. Thr-430 and Thr-459 each carry phosphothreonine. The ADP site is built by Gly-482, Glu-483, Glu-497, and Lys-502. An ATP-binding site is contributed by Gly-482. Glu-497 serves as a coordination point for ATP. The interval 526–545 is disordered; the sequence is HKKKGDDQSRQGGAPDAGQE.

This sequence belongs to the TCP-1 chaperonin family. As to quaternary structure, component of the chaperonin-containing T-complex (TRiC), a hexadecamer composed of two identical back-to-back stacked rings enclosing a protein folding chamber. Each ring is made up of eight different subunits: TCP1/CCT1, CCT2, CCT3, CCT4, CCT5, CCT6A/CCT6, CCT7, CCT8. Interacts with PACRG. Interacts with DNAAF4. Interacts with DLEC1.

The protein localises to the cytoplasm. It carries out the reaction ATP + H2O = ADP + phosphate + H(+). Component of the chaperonin-containing T-complex (TRiC), a molecular chaperone complex that assists the folding of actin, tubulin and other proteins upon ATP hydrolysis. The TRiC complex mediates the folding of WRAP53/TCAB1, thereby regulating telomere maintenance. As part of the TRiC complex may play a role in the assembly of BBSome, a complex involved in ciliogenesis regulating transports vesicles to the cilia. In Macaca fascicularis (Crab-eating macaque), this protein is T-complex protein 1 subunit gamma (CCT3).